A 486-amino-acid polypeptide reads, in one-letter code: Receptor-interacting serine/threonine-protein kinase 3 (486 aa).

Ser-2 is subject to Phosphoserine. The region spanning 22 to 292 (LKKLEFVGKG…DCEPKTNEVY (271 aa)) is the Protein kinase domain. Residues 28 to 36 (VGKGGFGVV) and Lys-51 contribute to the ATP site. Asp-143 acts as the Proton acceptor in catalysis. Position 165 is a phosphoserine (Ser-165). Residue Thr-187 is modified to Phosphothreonine. The residue at position 204 (Ser-204) is a Phosphoserine; by autocatalysis. Phosphothreonine; by autocatalysis is present on Thr-231. Ser-232 carries the post-translational modification Phosphoserine; by autocatalysis. A Phosphothreonine modification is found at Thr-257. A phosphoserine mark is found at Ser-304 and Ser-326. The segment at 312-333 (QHRSSGRNLSAREPSQRGTEMD) is disordered. Thr-338 carries the post-translational modification Phosphothreonine. A disordered region spans residues 349 to 388 (LEEPSGPVPGKCPERQAQDTSVGPATPARTSSDPVAGTPQ). Residues Ser-353, Ser-369, and Ser-380 each carry the phosphoserine modification. A compositionally biased stretch (polar residues) spans 366-381 (QDTSVGPATPARTSSD). Thr-392 is subject to Phosphothreonine. The RIP homotypic interaction motif (RHIM) motif lies at 440 to 461 (LVFNNCSEVQIGNYNSLVAPPR). Residues 462 to 486 (TTASSSAKYDQAQFGRGRGWQPFHK) form a disordered region. Arg-477 bears the Omega-N-methylarginine mark.

The protein belongs to the protein kinase superfamily. TKL Ser/Thr protein kinase family. In terms of assembly, interacts (via RIP homotypic interaction motif) with RIPK1 (via RIP homotypic interaction motif); this interaction induces RIPK1 phosphorylation and formation of a RIPK1-RIPK3 necrosis-inducing complex. Interacts with MLKL; the interaction is direct and triggers necroptosis. Interacts with ZBP1 (via RIP homotypic interaction motif); interaction with ZBP1 activates RIPK3, triggering necroptosis. Upon TNF-induced necrosis, the RIPK1-RIPK3 dimer further interacts with PGAM5 and MLKL; the formation of this complex leads to PGAM5 phosphorylation and increase in PGAM5 phosphatase activity. Binds TRAF2 and is recruited to the TNFR-1 signaling complex. Interacts with PYGL, GLUL and GLUD1; these interactions result in activation of these metabolic enzymes. Interacts with BIRC2/c-IAP1, BIRC3/c-IAP2 and XIAP/BIRC4. Interacts with ARHGEF2. Interacts with PELI1 (via atypical FHA domain); the phosphorylated form at Thr-187 binds preferentially to PELI1. Interacts with BUB1B, TRAF2 and STUB1. Interacts with CASP6. Component of the AIM2 PANoptosome complex, a multiprotein complex that drives inflammatory cell death (PANoptosis). (Microbial infection) Interacts (via RIP homotypic interaction motif) with murid herpesvirus protein RIR1; this interaction disrupts RIP3-RIP1 interactions characteristic of TNF-alpha induced necroptosis, thereby suppressing this death pathway. Post-translationally, RIPK1 and RIPK3 undergo reciprocal auto- and trans-phosphorylation. Autophosphorylated following interaction with ZBP1. Phosphorylation of Ser-204 plays a role in the necroptotic function of RIPK3. Autophosphorylates at Thr-231 and Ser-232 following activation by ZBP1: phosphorylation at these sites is a hallmark of necroptosis and is required for binding MLKL. Phosphorylation at Thr-187 is important for its kinase activity, interaction with PELI1 and for its ability to mediate TNF-induced necroptosis. Polyubiquitinated with 'Lys-48' and 'Lys-63'-linked chains by BIRC2/c-IAP1 and BIRC3/c-IAP2, leading to activation of NF-kappa-B. Ubiquitinated by STUB1 leading to its subsequent proteasome-dependent degradation. In terms of tissue distribution, expressed in embryo and in adult spleen, liver, testis, heart, brain and lung.

The protein resides in the cytoplasm. It localises to the cytosol. The protein localises to the nucleus. The catalysed reaction is L-seryl-[protein] + ATP = O-phospho-L-seryl-[protein] + ADP + H(+). It catalyses the reaction L-threonyl-[protein] + ATP = O-phospho-L-threonyl-[protein] + ADP + H(+). Activity is stimulated by ZBP1, which senses double-stranded Z-RNA structures. RIPK3-dependent necroptosis is inhibited by RIPK1: RIPK1 prevents the ZBP1-induced activation of RIPK3 via FADD-mediated recruitment of CASP8, which cleaves RIPK1 and limits TNF-induced necroptosis. Inhibited by type II inhibitor 1-(4-fluorophenyl)-N-[3-fluoro-4-(1H-pyrrolo[2,3-b]pyridin-4-yloxy)phenyl]-2-oxo-1,2-dihydropyridine-3-carboxamide. Functionally, serine/threonine-protein kinase that activates necroptosis and apoptosis, two parallel forms of cell death. Necroptosis, a programmed cell death process in response to death-inducing TNF-alpha family members, is triggered by RIPK3 following activation by ZBP1. Activated RIPK3 forms a necrosis-inducing complex and mediates phosphorylation of MLKL, promoting MLKL localization to the plasma membrane and execution of programmed necrosis characterized by calcium influx and plasma membrane damage. In addition to TNF-induced necroptosis, necroptosis can also take place in the nucleus in response to orthomyxoviruses infection: following ZBP1 activation, which senses double-stranded Z-RNA structures, nuclear RIPK3 catalyzes phosphorylation and activation of MLKL, promoting disruption of the nuclear envelope and leakage of cellular DNA into the cytosol. Also regulates apoptosis: apoptosis depends on RIPK1, FADD and CASP8, and is independent of MLKL and RIPK3 kinase activity. Phosphorylates RIPK1: RIPK1 and RIPK3 undergo reciprocal auto- and trans-phosphorylation. In some cell types, also able to restrict viral replication by promoting cell death-independent responses. In response to flavivirus infection in neurons, promotes a cell death-independent pathway that restricts viral replication: together with ZBP1, promotes a death-independent transcriptional program that modifies the cellular metabolism via up-regulation expression of the enzyme ACOD1/IRG1 and production of the metabolite itaconate. Itaconate inhibits the activity of succinate dehydrogenase, generating a metabolic state in neurons that suppresses replication of viral genomes. RIPK3 binds to and enhances the activity of three metabolic enzymes: GLUL, GLUD1, and PYGL. These metabolic enzymes may eventually stimulate the tricarboxylic acid cycle and oxidative phosphorylation, which could result in enhanced ROS production. The polypeptide is Receptor-interacting serine/threonine-protein kinase 3 (Mus musculus (Mouse)).